Consider the following 93-residue polypeptide: Small ribosomal subunit protein bS16 (93 aa).

The protein belongs to the bacterial ribosomal protein bS16 family.

The polypeptide is Small ribosomal subunit protein bS16 (Dictyoglomus thermophilum (strain ATCC 35947 / DSM 3960 / H-6-12)).